The sequence spans 124 residues: Ribosome-binding factor A (124 aa).

It belongs to the RbfA family. Monomer. Binds 30S ribosomal subunits, but not 50S ribosomal subunits or 70S ribosomes.

The protein localises to the cytoplasm. Functionally, one of several proteins that assist in the late maturation steps of the functional core of the 30S ribosomal subunit. Associates with free 30S ribosomal subunits (but not with 30S subunits that are part of 70S ribosomes or polysomes). Required for efficient processing of 16S rRNA. May interact with the 5'-terminal helix region of 16S rRNA. This is Ribosome-binding factor A from Thiobacillus denitrificans (strain ATCC 25259 / T1).